Consider the following 229-residue polypeptide: Cytochrome c oxidase subunit 2 (229 aa).

Residues 1–14 (MPTPNQTNFQDAAS) are Mitochondrial intermembrane-facing. The chain crosses the membrane as a helical span at residues 15–45 (PLMEELTHFHDHTLMIVFMISLLVLYILLSM). Residues 46 to 59 (LSTKLTHTNTANAQ) lie on the Mitochondrial matrix side of the membrane. A helical membrane pass occupies residues 60-87 (QAEMVWTILPAIILITIALPSLQILYMM). Residues 88-229 (DEINKPHMTI…DLWLAMIDTL (142 aa)) lie on the Mitochondrial intermembrane side of the membrane. Residues histidine 161, cysteine 196, glutamate 198, cysteine 200, histidine 204, and methionine 207 each contribute to the Cu cation site. Glutamate 198 serves as a coordination point for Mg(2+).

It belongs to the cytochrome c oxidase subunit 2 family. As to quaternary structure, component of the cytochrome c oxidase (complex IV, CIV), a multisubunit enzyme composed of 14 subunits. The complex is composed of a catalytic core of 3 subunits MT-CO1, MT-CO2 and MT-CO3, encoded in the mitochondrial DNA, and 11 supernumerary subunits COX4I, COX5A, COX5B, COX6A, COX6B, COX6C, COX7A, COX7B, COX7C, COX8 and NDUFA4, which are encoded in the nuclear genome. The complex exists as a monomer or a dimer and forms supercomplexes (SCs) in the inner mitochondrial membrane with NADH-ubiquinone oxidoreductase (complex I, CI) and ubiquinol-cytochrome c oxidoreductase (cytochrome b-c1 complex, complex III, CIII), resulting in different assemblies (supercomplex SCI(1)III(2)IV(1) and megacomplex MCI(2)III(2)IV(2)). Found in a complex with TMEM177, COA6, COX18, COX20, SCO1 and SCO2. Interacts with TMEM177 in a COX20-dependent manner. Interacts with COX20. Interacts with COX16. Cu cation serves as cofactor.

It is found in the mitochondrion inner membrane. It carries out the reaction 4 Fe(II)-[cytochrome c] + O2 + 8 H(+)(in) = 4 Fe(III)-[cytochrome c] + 2 H2O + 4 H(+)(out). Component of the cytochrome c oxidase, the last enzyme in the mitochondrial electron transport chain which drives oxidative phosphorylation. The respiratory chain contains 3 multisubunit complexes succinate dehydrogenase (complex II, CII), ubiquinol-cytochrome c oxidoreductase (cytochrome b-c1 complex, complex III, CIII) and cytochrome c oxidase (complex IV, CIV), that cooperate to transfer electrons derived from NADH and succinate to molecular oxygen, creating an electrochemical gradient over the inner membrane that drives transmembrane transport and the ATP synthase. Cytochrome c oxidase is the component of the respiratory chain that catalyzes the reduction of oxygen to water. Electrons originating from reduced cytochrome c in the intermembrane space (IMS) are transferred via the dinuclear copper A center (CU(A)) of subunit 2 and heme A of subunit 1 to the active site in subunit 1, a binuclear center (BNC) formed by heme A3 and copper B (CU(B)). The BNC reduces molecular oxygen to 2 water molecules using 4 electrons from cytochrome c in the IMS and 4 protons from the mitochondrial matrix. This is Cytochrome c oxidase subunit 2 (MT-CO2) from Pelomedusa subrufa (African side-necked turtle).